The chain runs to 338 residues: Large ribosomal subunit protein uL3 (338 aa).

Residues 228 to 237 (HKHRKGHRRT) show a composition bias toward basic residues. A disordered region spans residues 228–255 (HKHRKGHRRTGTIGPQAPALMFTQPRPG).

The protein belongs to the universal ribosomal protein uL3 family. In terms of assembly, part of the 50S ribosomal subunit. Forms a cluster with proteins L14 and L24e.

Its function is as follows. One of the primary rRNA binding proteins, it binds directly near the 3'-end of the 23S rRNA, where it nucleates assembly of the 50S subunit. The protein is Large ribosomal subunit protein uL3 of Pyrobaculum calidifontis (strain DSM 21063 / JCM 11548 / VA1).